Reading from the N-terminus, the 65-residue chain is MGQKTALGSLLKSIGNSGQGKVVPGWGAVPVMAFIGVLLLVFLVIMLQIYNQSLLLQGFSVDWNG.

The helical transmembrane segment at 27 to 47 (GAVPVMAFIGVLLLVFLVIML) threads the bilayer.

This sequence belongs to the PsbH family. As to quaternary structure, PSII is composed of 1 copy each of membrane proteins PsbA, PsbB, PsbC, PsbD, PsbE, PsbF, PsbH, PsbI, PsbJ, PsbK, PsbL, PsbM, PsbT, PsbX, PsbY, Psb30/Ycf12, peripheral proteins PsbO, CyanoQ (PsbQ), PsbU, PsbV and a large number of cofactors. It forms dimeric complexes.

The protein resides in the cellular thylakoid membrane. Its function is as follows. One of the components of the core complex of photosystem II (PSII), required for its stability and/or assembly. PSII is a light-driven water:plastoquinone oxidoreductase that uses light energy to abstract electrons from H(2)O, generating O(2) and a proton gradient subsequently used for ATP formation. It consists of a core antenna complex that captures photons, and an electron transfer chain that converts photonic excitation into a charge separation. The protein is Photosystem II reaction center protein H of Prochlorococcus marinus (strain NATL1A).